Consider the following 336-residue polypeptide: Phospholipase A1 (336 aa).

The first 27 residues, 1–27 (MEENMNLKYLLLFVYFVQVLNCCYGHG), serve as a signal peptide directing secretion. Residues 28–36 (DPLSYELDR) constitute a propeptide that is removed on maturation. C40 and C123 are joined by a disulfide. The Nucleophile role is filled by S173. Residue D201 is the Charge relay system of the active site. Cystine bridges form between C212/C217 and C255/C263. Residue H265 is the Charge relay system of the active site. 3 disulfides stabilise this stretch: C280–C304, C281–C329, and C297–C302.

Belongs to the AB hydrolase superfamily. Lipase family. Expressed by the venom gland.

Its subcellular location is the secreted. It carries out the reaction a 1,2-diacyl-sn-glycero-3-phosphocholine + H2O = a 2-acyl-sn-glycero-3-phosphocholine + a fatty acid + H(+). Functionally, catalyzes the hydrolysis of phosphatidylcholine with phospholipase A1 activity. Induces hemolytic activity. Acts as an allergen. The chain is Phospholipase A1 from Vespula vulgaris (Yellow jacket).